We begin with the raw amino-acid sequence, 683 residues long: Patellin-2 (683 aa).

The disordered stretch occupies residues 1 to 23 (MAQEEIQKPTASVPVVKEETPAP). Ala-2 bears the N-acetylalanine mark. Position 79 is a phosphoserine (Ser-79). Residues 86–163 (LASELQEAEK…ETKEEEKSAA (78 aa)) adopt a coiled-coil conformation. The segment at 111 to 279 (KREFTAPPPP…KKEEKATAST (169 aa)) is disordered. A compositionally biased stretch (basic and acidic residues) spans 124–161 (VKEEKVEEKKTEETEEKKEEVKTEEKSLEAETKEEEKS). Low complexity predominate over residues 232 to 243 (PVETTPAAPVTT). The span at 244–275 (ETKEEEKAAPVTTETKEEEKAAPGETKKEEKA) shows a compositional bias: basic and acidic residues. Lys-394 participates in a covalent cross-link: Glycyl lysine isopeptide (Lys-Gly) (interchain with G-Cter in ubiquitin). Residues 404-576 (EDLEGSEFEK…KYGGLSKDSP (173 aa)) enclose the CRAL-TRIO domain. The GOLD domain occupies 580–681 (EDGVTEAVVK…KKKVLYRSKT (102 aa)).

Belongs to the patellin family. In terms of assembly, interacts with the deubiquitinating enzyme AMSH3.

The protein localises to the membrane. The protein resides in the cytoplasm. Carrier protein that may be involved in membrane-trafficking events associated with cell plate formation during cytokinesis. Binds to some hydrophobic molecules such as phosphoinositides and promotes their transfer between the different cellular sites. The chain is Patellin-2 (PATL2) from Arabidopsis thaliana (Mouse-ear cress).